The primary structure comprises 504 residues: Cytochrome P450 3A16 (504 aa).

Cys443 contacts heme.

The protein belongs to the cytochrome P450 family. Requires heme as cofactor.

The protein resides in the endoplasmic reticulum membrane. The protein localises to the microsome membrane. The enzyme catalyses an organic molecule + reduced [NADPH--hemoprotein reductase] + O2 = an alcohol + oxidized [NADPH--hemoprotein reductase] + H2O + H(+). Cytochromes P450 are a group of heme-thiolate monooxygenases. In liver microsomes, this enzyme is involved in an NADPH-dependent electron transport pathway. It oxidizes a variety of structurally unrelated compounds, including steroids, fatty acids, and xenobiotics. This is Cytochrome P450 3A16 (Cyp3a16) from Mus musculus (Mouse).